Here is a 309-residue protein sequence, read N- to C-terminus: Taste receptor type 2 member 31 (309 aa).

Topologically, residues 1–2 (MI) are extracellular. A helical transmembrane segment spans residues 3 to 23 (TFLPIIFSILVVVTFVIGNFA). Residues 24–55 (NGFIALVNSTEWVKRQKISFADQILTALAVSR) are Cytoplasmic-facing. Residues 56 to 76 (VGLLWVLLLNWYATVLNPAFY) traverse the membrane as a helical segment. Residues 77-100 (SVEVRTTTYNVWAVTNHFSNWLAT) are Extracellular-facing. A helical transmembrane segment spans residues 101–121 (SLSIFYLLKIANFSNLIFLHL). Residues 122-126 (KRRVK) are Cytoplasmic-facing. Residues 127–147 (NVILVMLLGPLLILACHLFMV) form a helical membrane-spanning segment. Residues 148–181 (NMNEIVRTKEYEENMTWKYILRNAIYHPGMTVTT) are Extracellular-facing. N161 is a glycosylation site (N-linked (GlcNAc...) asparagine). The chain crosses the membrane as a helical span at residues 182 to 202 (LQNLVPFTLTLISFLLLICSL). Over 203–229 (CKHLKKMQLHGKGPQDPSTKVHIKALQ) the chain is Cytoplasmic. The helical transmembrane segment at 230–250 (IVISFLLLCVIYFVSVIISIW) threads the bilayer. Residues 251 to 259 (SFESLGNKP) are Extracellular-facing. A helical transmembrane segment spans residues 260–280 (VFMFCQAIRFSYPSAHPFIVI). Residues 281–309 (WGNKKLKQTFLSVLWNVRYWVKGQKPSSL) lie on the Cytoplasmic side of the membrane.

This sequence belongs to the G-protein coupled receptor T2R family.

The protein resides in the membrane. Its function is as follows. Receptor that may play a role in the perception of bitterness and is gustducin-linked. May play a role in sensing the chemical composition of the gastrointestinal content. The activity of this receptor may stimulate alpha gustducin, mediate PLC-beta-2 activation and lead to the gating of TRPM5. This chain is Taste receptor type 2 member 31 (TAS2R31), found in Papio hamadryas (Hamadryas baboon).